Reading from the N-terminus, the 414-residue chain is Histidine--tRNA ligase (414 aa).

This sequence belongs to the class-II aminoacyl-tRNA synthetase family. In terms of assembly, homodimer.

Its subcellular location is the cytoplasm. It carries out the reaction tRNA(His) + L-histidine + ATP = L-histidyl-tRNA(His) + AMP + diphosphate + H(+). The chain is Histidine--tRNA ligase from Anaeromyxobacter dehalogenans (strain 2CP-1 / ATCC BAA-258).